Reading from the N-terminus, the 859-residue chain is Leucine--tRNA ligase (859 aa).

Positions 42–52 (PYPSGRLHMGH) match the 'HIGH' region motif. The short motif at 618 to 622 (KMSKS) is the 'KMSKS' region element. An ATP-binding site is contributed by lysine 621.

The protein belongs to the class-I aminoacyl-tRNA synthetase family.

The protein resides in the cytoplasm. The enzyme catalyses tRNA(Leu) + L-leucine + ATP = L-leucyl-tRNA(Leu) + AMP + diphosphate. In Shewanella amazonensis (strain ATCC BAA-1098 / SB2B), this protein is Leucine--tRNA ligase.